Here is a 285-residue protein sequence, read N- to C-terminus: Phosphatidylserine decarboxylase proenzyme (285 aa).

Catalysis depends on charge relay system; for autoendoproteolytic cleavage activity residues Asp-89, His-146, and Ser-252. The Schiff-base intermediate with substrate; via pyruvic acid; for decarboxylase activity role is filled by Ser-252. Residue Ser-252 is modified to Pyruvic acid (Ser); by autocatalysis.

Belongs to the phosphatidylserine decarboxylase family. PSD-B subfamily. Prokaryotic type I sub-subfamily. In terms of assembly, heterodimer of a large membrane-associated beta subunit and a small pyruvoyl-containing alpha subunit. Pyruvate serves as cofactor. Post-translationally, is synthesized initially as an inactive proenzyme. Formation of the active enzyme involves a self-maturation process in which the active site pyruvoyl group is generated from an internal serine residue via an autocatalytic post-translational modification. Two non-identical subunits are generated from the proenzyme in this reaction, and the pyruvate is formed at the N-terminus of the alpha chain, which is derived from the carboxyl end of the proenzyme. The autoendoproteolytic cleavage occurs by a canonical serine protease mechanism, in which the side chain hydroxyl group of the serine supplies its oxygen atom to form the C-terminus of the beta chain, while the remainder of the serine residue undergoes an oxidative deamination to produce ammonia and the pyruvoyl prosthetic group on the alpha chain. During this reaction, the Ser that is part of the protease active site of the proenzyme becomes the pyruvoyl prosthetic group, which constitutes an essential element of the active site of the mature decarboxylase.

The protein localises to the cell membrane. The enzyme catalyses a 1,2-diacyl-sn-glycero-3-phospho-L-serine + H(+) = a 1,2-diacyl-sn-glycero-3-phosphoethanolamine + CO2. It participates in phospholipid metabolism; phosphatidylethanolamine biosynthesis; phosphatidylethanolamine from CDP-diacylglycerol: step 2/2. Functionally, catalyzes the formation of phosphatidylethanolamine (PtdEtn) from phosphatidylserine (PtdSer). The polypeptide is Phosphatidylserine decarboxylase proenzyme (Vibrio parahaemolyticus serotype O3:K6 (strain RIMD 2210633)).